A 522-amino-acid polypeptide reads, in one-letter code: Sugar transport protein MST2 (522 aa).

Topologically, residues 1–24 (MAAATAADVAEDTASVYSGKLTLY) are cytoplasmic. A helical membrane pass occupies residues 25–45 (VFLTCGVAATGGLIIGYDIGI). Topologically, residues 46–82 (SGGVTSMDTFLGKFFPSVLHQEQTAQGTSQYCKFNSQ) are extracellular. Residues 83 to 103 (PLTAFTSSLYLAALVASFFVA) form a helical membrane-spanning segment. Topologically, residues 104 to 111 (SFTRALGR) are cytoplasmic. Residues 112 to 132 (KWSMFGGGVSFLAGATLNGAA) form a helical membrane-spanning segment. Over 133-134 (RN) the chain is Extracellular. Residues 135–155 (VAMLIVGRILLGIGVAFCGLS) traverse the membrane as a helical segment. Residues 156-169 (TPIYLSEMAPPRLR) lie on the Cytoplasmic side of the membrane. The chain crosses the membrane as a helical span at residues 170–190 (GMLNIGLQLMITVGIFSANLV). The Extracellular portion of the chain corresponds to 191-204 (NYGAAKIRGGWGWR). A helical membrane pass occupies residues 205–225 (VSLGLAAAPACVIAVGSLFLP). Topologically, residues 226 to 291 (DSPSSLINRG…DVLQRRYRPQ (66 aa)) are cytoplasmic. Residues 292–312 (LAMAVLIPFFQQLTGINVIMF) traverse the membrane as a helical segment. Topologically, residues 313 to 329 (YAPVLFKTIGLGGDASL) are extracellular. The helical transmembrane segment at 330–350 (MSAVITGLVNIVATFVSIATV) threads the bilayer. Residues 351–361 (DSLGRRKLLFQ) lie on the Cytoplasmic side of the membrane. A helical transmembrane segment spans residues 362–382 (GGCQMLVSQVIIGTLIGVVFG). Residues 383 to 391 (TSGDGNISR) are Extracellular-facing. A helical transmembrane segment spans residues 392–412 (ALAVCIVVFICVYVAGFAWSW). Over 413 to 434 (GPLGVLLPSEIFPLEVRPAGQS) the chain is Cytoplasmic. A helical transmembrane segment spans residues 435–455 (ISVAVNMLCTFAVAEAFLPML). The Extracellular segment spans residues 456–459 (CHMR). The chain crosses the membrane as a helical span at residues 460-480 (FGLFYFFSGWVLVMTLFVSAF). At 481 to 522 (LPETKGVPIEKMTVVWRTHWFWGRFYCNQDADAHVQVANSKV) the chain is on the cytoplasmic side.

The protein belongs to the major facilitator superfamily. Sugar transporter (TC 2.A.1.1) family.

The protein localises to the membrane. Functionally, mediates active uptake of hexoses by sugar:proton symport. Can transport glucose. This Oryza sativa subsp. japonica (Rice) protein is Sugar transport protein MST2.